Here is a 63-residue protein sequence, read N- to C-terminus: Large ribosomal subunit protein bL28 (63 aa).

This sequence belongs to the bacterial ribosomal protein bL28 family.

In Beutenbergia cavernae (strain ATCC BAA-8 / DSM 12333 / CCUG 43141 / JCM 11478 / NBRC 16432 / NCIMB 13614 / HKI 0122), this protein is Large ribosomal subunit protein bL28.